A 139-amino-acid chain; its full sequence is AP-4 complex subunit sigma (139 aa).

The protein belongs to the adaptor complexes small subunit family. In terms of assembly, may be part of the adaptor protein complex 4 (AP-4), a heterotetramer composed of two large adaptins (epsilon-type subunitand beta-type subunit), a medium adaptin (mu-type subunit) and a small adaptin (sigma-type).

Its subcellular location is the golgi apparatus. It is found in the trans-Golgi network membrane. In terms of biological role, probable component of an adaptor protein complex. Adaptor protein complexes are vesicle coat components involved both in vesicle formation and cargo selection. They control the vesicular transport of proteins in different trafficking pathways. This is AP-4 complex subunit sigma from Dictyostelium discoideum (Social amoeba).